A 468-amino-acid chain; its full sequence is Peroxisome proliferator-activated receptor alpha (468 aa).

Residues 99–173 (NIECRICGDK…VGMSHNAIRF (75 aa)) constitute a DNA-binding region (nuclear receptor). 2 consecutive NR C4-type zinc fingers follow at residues 102 to 122 (CRIC…CEGC) and 139 to 161 (CDRS…FHKC). An NR LBD domain is found at 239–466 (FVIHDMETLC…HPLLQEIYRD (228 aa)). Residues Ser280, Tyr314, and Tyr464 each coordinate indeglitazar. The interval 304–433 (DQVTLLKYGV…PKLLQKMADL (130 aa)) is required for heterodimerization with RXRA.

The protein belongs to the nuclear hormone receptor family. NR1 subfamily. Heterodimer; with RXRA. This heterodimerization is required for DNA binding and transactivation activity. Interacts with NCOA3 coactivator. Interacts with CITED2; the interaction stimulates its transcriptional activity. Also interacts with PPARBP in vitro. Interacts with AKAP13, LPIN1, PRDM16 and coactivator NCOA6. Interacts with ASXL1 and ASXL2. Interacts with PER2. Interacts with SIRT1; the interaction seems to be modulated by NAD(+) levels. Interacts with CRY1 and CRY2. In hepatocytes, interacts with PAQR3 and HUWE1; the interactions promote PPARA poylubiquitination and HUWE1-mediated degradation. Ubiquitinated by E3 ubiquitin-protein ligase HUWE1; leading to proteasomal degradation. In terms of processing, phosphorylated. As to expression, skeletal muscle, liver, heart and kidney. Expressed in monocytes.

The protein resides in the nucleus. Ligand-activated transcription factor. Key regulator of lipid metabolism. Activated by the endogenous ligand 1-palmitoyl-2-oleoyl-sn-glycerol-3-phosphocholine (16:0/18:1-GPC). Activated by oleylethanolamide, a naturally occurring lipid that regulates satiety. Receptor for peroxisome proliferators such as hypolipidemic drugs and fatty acids. Regulates the peroxisomal beta-oxidation pathway of fatty acids. Functions as a transcription activator for the ACOX1 and P450 genes. Transactivation activity requires heterodimerization with RXRA and is antagonized by NR2C2. May be required for the propagation of clock information to metabolic pathways regulated by PER2. This chain is Peroxisome proliferator-activated receptor alpha (PPARA), found in Homo sapiens (Human).